A 284-amino-acid chain; its full sequence is Proteasome subunit beta 1 (284 aa).

The propeptide at 1–54 (MAQRDTGGRLGAEFFTPGDSSFTAFLAAHRPALLSTRGLLPDGVRAAPDRVPHG) is removed in mature form; by autocatalysis. The active-site Nucleophile is T55. Positions 256–277 (RLPESETEDLSREMVEQRHTRP) are enriched in basic and acidic residues. Residues 256-284 (RLPESETEDLSREMVEQRHTRPDGPTAAM) are disordered.

The protein belongs to the peptidase T1B family. In terms of assembly, the 20S proteasome core is composed of 14 alpha and 14 beta subunits that assemble into four stacked heptameric rings, resulting in a barrel-shaped structure. The two inner rings, each composed of seven catalytic beta subunits, are sandwiched by two outer rings, each composed of seven alpha subunits. The catalytic chamber with the active sites is on the inside of the barrel. Has a gated structure, the ends of the cylinder being occluded by the N-termini of the alpha-subunits. Is capped by the proteasome-associated ATPase, ARC.

It localises to the cytoplasm. The catalysed reaction is Cleavage of peptide bonds with very broad specificity.. It functions in the pathway protein degradation; proteasomal Pup-dependent pathway. Its activity is regulated as follows. The formation of the proteasomal ATPase ARC-20S proteasome complex, likely via the docking of the C-termini of ARC into the intersubunit pockets in the alpha-rings, may trigger opening of the gate for substrate entry. Interconversion between the open-gate and close-gate conformations leads to a dynamic regulation of the 20S proteasome proteolysis activity. Functionally, component of the proteasome core, a large protease complex with broad specificity involved in protein degradation. This Streptomyces avermitilis (strain ATCC 31267 / DSM 46492 / JCM 5070 / NBRC 14893 / NCIMB 12804 / NRRL 8165 / MA-4680) protein is Proteasome subunit beta 1.